The primary structure comprises 228 residues: UPF0173 metal-dependent hydrolase lin1612 (228 aa).

It belongs to the UPF0173 family.

The sequence is that of UPF0173 metal-dependent hydrolase lin1612 from Listeria innocua serovar 6a (strain ATCC BAA-680 / CLIP 11262).